The chain runs to 255 residues: MDESVDPVELLLRLLIRHKPHLKPYAYRQDSWQRVLDEYNRQTGSRYRQSRTLKTKFRRLKDLFSADRAQFSPSQLKLMGALLDEAPEHPRPRTKFGNESSSSLSSSSFIKSHPGPDPFQQLSSAEHPNNHSSDDEHSGSQPLPLDSITIGIPPTLHTIPMILSKDNDVGKVIKSPKINKGTNRFSETVLPPQMAAEQSWSDSNMELEICLDYLHNELEVIKKRQEDFECKVLNKLNIIEALLSQMRPPSQGDKI.

Positions P87–T149 are disordered. Residues P128–S138 show a composition bias toward basic and acidic residues.

In terms of biological role, positive regulator of allophanate-induced genes in S.cerevisiae. The protein is Protein DAL82 (DAL82) of Saccharomyces cerevisiae (strain ATCC 204508 / S288c) (Baker's yeast).